A 372-amino-acid polypeptide reads, in one-letter code: B2 bradykinin receptor (372 aa).

Residues 1 to 34 (MFNITSQVSALNATLAQGNSCLDAEWWSWLNTIQ) lie on the Extracellular side of the membrane. N-linked (GlcNAc...) asparagine glycosylation is found at asparagine 3 and asparagine 12. Residues 35–58 (APFLWVLFVLAVLENIFVLSVFFL) form a helical membrane-spanning segment. The Cytoplasmic segment spans residues 59–67 (HKSSCTVAE). A helical membrane pass occupies residues 68 to 92 (IYLGNLAVADLILAFGLPFWAITIA). The Extracellular portion of the chain corresponds to 93–105 (NNFDWLFGEVLCR). The cysteines at positions 104 and 185 are disulfide-linked. The chain crosses the membrane as a helical span at residues 106-127 (MVNTMIQMNMYSSICFLMLVSI). The Cytoplasmic portion of the chain corresponds to 128–149 (DRYLALVKTMSMGRMRGVRWAK). Tyrosine 130 bears the Phosphotyrosine mark. The chain crosses the membrane as a helical span at residues 150–172 (LYSLVIWGCALLLSSPMLVFRTM). The Extracellular portion of the chain corresponds to 173 to 195 (KDYRDEGHNVTACLIIYPSLTWQ). The N-linked (GlcNAc...) asparagine glycan is linked to asparagine 181. A helical transmembrane segment spans residues 196-222 (VFTNVLLNLVGFLLPLSIITFCTVQIM). At 223–241 (QVLRNNEMQKFKEIQTERR) the chain is on the cytoplasmic side. A helical membrane pass occupies residues 242–266 (ATVLVLAVLLLFVVCWLPFQIGTFL). Topologically, residues 267–284 (DTLRLLGFLPGCWEHVID) are extracellular. The chain crosses the membrane as a helical span at residues 285–308 (LITQISSYLAYSNSCLNPLVYVIV). The Cytoplasmic portion of the chain corresponds to 309–364 (GKRFRKKSREVYHGLCRSGGCVSEPAQSENSMGTLRTSISVDRQIHKLQDWARSSS). Tyrosine 320 bears the Phosphotyrosine mark. Cysteine 324 is lipidated: S-palmitoyl cysteine. Serine 339 bears the Phosphoserine mark. The residue at position 342 (threonine 342) is a Phosphothreonine. Residues serine 346 and serine 348 each carry the phosphoserine; by GRK6 modification.

It belongs to the G-protein coupled receptor 1 family. Bradykinin receptor subfamily. BDKRB2 sub-subfamily. In terms of assembly, forms a complex with PECAM1 and GNAQ. Interacts with PECAM1.

The protein resides in the cell membrane. In terms of biological role, receptor for bradykinin. It is associated with G proteins that activate a phosphatidylinositol-calcium second messenger system. This is B2 bradykinin receptor (BDKRB2) from Cavia porcellus (Guinea pig).